Reading from the N-terminus, the 193-residue chain is UPF0314 protein Pden_1914 (193 aa).

A run of 4 helical transmembrane segments spans residues alanine 13–glycine 33, tryptophan 62–alanine 82, leucine 148–isoleucine 168, and leucine 172–alanine 192.

Belongs to the UPF0314 family.

It localises to the cell membrane. The chain is UPF0314 protein Pden_1914 from Paracoccus denitrificans (strain Pd 1222).